The sequence spans 172 residues: ATP synthase subunit b (172 aa).

The chain crosses the membrane as a helical span at residues serine 12–valine 32. 2 stretches are compositionally biased toward basic and acidic residues: residues glutamate 63–alanine 74 and alanine 116–alanine 131. Residues glutamate 63–alanine 131 are disordered.

It belongs to the ATPase B chain family. F-type ATPases have 2 components, F(1) - the catalytic core - and F(0) - the membrane proton channel. F(1) has five subunits: alpha(3), beta(3), gamma(1), delta(1), epsilon(1). F(0) has three main subunits: a(1), b(2) and c(10-14). The alpha and beta chains form an alternating ring which encloses part of the gamma chain. F(1) is attached to F(0) by a central stalk formed by the gamma and epsilon chains, while a peripheral stalk is formed by the delta and b chains.

The protein localises to the cell membrane. F(1)F(0) ATP synthase produces ATP from ADP in the presence of a proton or sodium gradient. F-type ATPases consist of two structural domains, F(1) containing the extramembraneous catalytic core and F(0) containing the membrane proton channel, linked together by a central stalk and a peripheral stalk. During catalysis, ATP synthesis in the catalytic domain of F(1) is coupled via a rotary mechanism of the central stalk subunits to proton translocation. Functionally, component of the F(0) channel, it forms part of the peripheral stalk, linking F(1) to F(0). This is ATP synthase subunit b from Limosilactobacillus reuteri (strain DSM 20016) (Lactobacillus reuteri).